The chain runs to 802 residues: Chromosome alignment-maintaining phosphoprotein 1 (802 aa).

The residue at position 1 (Met-1) is an N-acetylmethionine. Over residues 88-105 (SDKWSEQPKEQPSKDTES) the composition is skewed to basic and acidic residues. The tract at residues 88 to 475 (SDKWSEQPKE…PDLWKSSFIM (388 aa)) is disordered. Ser-108 carries the post-translational modification Phosphoserine. The span at 135–148 (QKTSPSLCPESQAS) shows a compositional bias: polar residues. Residues 185 to 203 (ERVDPPCELPELEKPERGP) show a composition bias toward basic and acidic residues. Phosphoserine occurs at positions 204, 207, 234, 237, 243, 252, 254, 265, 272, 276, 298, 309, 334, 345, and 365. Positions 261 to 479 (ARTASPEPRK…KSSFIMESQK (219 aa)) are mediates interaction with MAD2L2. The span at 332–351 (PMSPGPWKPIPSVSPGPWKP) shows a compositional bias: pro residues. Residues 354–368 (SMSTASWKSSVSSGS) show a composition bias toward low complexity. A compositionally biased stretch (polar residues) spans 369–378 (WKTPPTSPES). Thr-371 is subject to Phosphothreonine. 9 positions are modified to phosphoserine: Ser-375, Ser-394, Ser-405, Ser-416, Ser-421, Ser-425, Ser-432, Ser-434, and Ser-441. The tract at residues 440-580 (VSPDQRKTSP…EIQLEAVDNA (141 aa)) is mediates localization to the spindle and the kinetochore and is required for the attachment of spindle microtubules to the kinetochore. Residue Thr-447 is modified to Phosphothreonine. Phosphoserine is present on residues Ser-448, Ser-451, and Ser-461. Lys-479 is modified (N6-acetyllysine; alternate). Residue Lys-479 forms a Glycyl lysine isopeptide (Lys-Gly) (interchain with G-Cter in SUMO2); alternate linkage. Ser-497, Ser-502, and Ser-532 each carry phosphoserine. Residue Lys-555 forms a Glycyl lysine isopeptide (Lys-Gly) (interchain with G-Cter in SUMO2) linkage. A mediates localization to the chromosome and the spindle and negatively regulates chromosome alignment region spans residues 581–802 (KCDSLAQEGL…LESPLEEQQI (222 aa)). The residue at position 593 (Thr-593) is a Phosphothreonine. Lys-596 participates in a covalent cross-link: Glycyl lysine isopeptide (Lys-Gly) (interchain with G-Cter in SUMO2). Phosphoserine is present on residues Ser-603, Ser-605, Ser-617, Ser-622, Ser-641, Ser-642, and Ser-643. The disordered stretch occupies residues 603-625 (SPSSKKLKKDSQENSDAELSSSE). A Glycyl lysine isopeptide (Lys-Gly) (interchain with G-Cter in SUMO2) cross-link involves residue Lys-660. Position 665 is a phosphoserine (Ser-665). Lys-679 participates in a covalent cross-link: Glycyl lysine isopeptide (Lys-Gly) (interchain with G-Cter in SUMO2). A Phosphoserine modification is found at Ser-726. The segment at 728–750 (YKCTICGKAFLLESLLKNHVAAH) adopts a C2H2-type zinc-finger fold.

As to quaternary structure, interacts with MAD2L2. Interacts with POGZ, CBX1, CBX3 and CBX5. Post-translationally, phosphorylated by CDK1. Mitotic phosphorylation is required for the attachment of spindle microtubules to the kinetochore.

Its subcellular location is the nucleus. It localises to the chromosome. The protein localises to the centromere. The protein resides in the kinetochore. It is found in the cytoplasm. Its subcellular location is the cytoskeleton. It localises to the spindle. Functionally, required for proper alignment of chromosomes at metaphase and their accurate segregation during mitosis. Involved in the maintenance of spindle microtubules attachment to the kinetochore during sister chromatid biorientation. May recruit CENPE and CENPF to the kinetochore. The polypeptide is Chromosome alignment-maintaining phosphoprotein 1 (Champ1) (Mus musculus (Mouse)).